Consider the following 377-residue polypeptide: Nitric oxide reductase FlRd-NAD(+) reductase (377 aa).

This sequence belongs to the FAD-dependent oxidoreductase family. The cofactor is FAD.

It is found in the cytoplasm. It catalyses the reaction 2 reduced [nitric oxide reductase rubredoxin domain] + NAD(+) + H(+) = 2 oxidized [nitric oxide reductase rubredoxin domain] + NADH. Its pathway is nitrogen metabolism; nitric oxide reduction. In terms of biological role, one of at least two accessory proteins for anaerobic nitric oxide (NO) reductase. Reduces the rubredoxin moiety of NO reductase. This Escherichia coli (strain SE11) protein is Nitric oxide reductase FlRd-NAD(+) reductase.